Here is a 302-residue protein sequence, read N- to C-terminus: Putative beta-glucosidase 17 (302 aa).

The first 27 residues, 1 to 27 (MMAVAAATRIAVVVVAALAALAPGARG), serve as a signal peptide directing secretion. A beta-D-glucoside is bound by residues Gln-47, His-149, and 194-195 (NE). The Proton donor role is filled by Glu-195. Residues Cys-214 and Cys-221 are joined by a disulfide bond. Residue Asn-274 is glycosylated (N-linked (GlcNAc...) asparagine).

The protein belongs to the glycosyl hydrolase 1 family.

The enzyme catalyses Hydrolysis of terminal, non-reducing beta-D-glucosyl residues with release of beta-D-glucose.. This Oryza sativa subsp. japonica (Rice) protein is Putative beta-glucosidase 17 (BGLU17).